We begin with the raw amino-acid sequence, 781 residues long: Serine/threonine-protein kinase PLK4 (781 aa).

The 255-residue stretch at Tyr14–Met268 folds into the Protein kinase domain. ATP-binding positions include Leu20 to Val28 and Lys43. Asp139 functions as the Proton acceptor in the catalytic mechanism. In terms of domain architecture, Cryptic POLO box 1 (CPB1) spans Thr397–Lys514. The segment at Gln463–Asn486 is disordered. Residues Gln473–Asn486 show a composition bias toward polar residues. Residues Thr515 to Pro618 form the Cryptic POLO box 2 (CPB2) domain. The POLO box domain maps to Pro672 to Cys751.

It belongs to the protein kinase superfamily. Ser/Thr protein kinase family. CDC5/Polo subfamily. In terms of assembly, homodimer. Ubiquitinated by the SCF(Slimb) ubiquitin ligase complex; leading to its degradation by the proteasome during interphase and regulating centriole number and ensuring the block to centriole reduplication.

It is found in the cytoplasm. The protein resides in the cytoskeleton. The protein localises to the microtubule organizing center. It localises to the centrosome. Its subcellular location is the centriole. The catalysed reaction is L-seryl-[protein] + ATP = O-phospho-L-seryl-[protein] + ADP + H(+). The enzyme catalyses L-threonyl-[protein] + ATP = O-phospho-L-threonyl-[protein] + ADP + H(+). Functionally, serine/threonine-protein kinase that plays a central role in centriole duplication. Able to trigger procentriole formation on the surface of the mother centriole cylinder, using mother centriole as a platform, leading to the recruitment of centriole biogenesis proteins such as sas-6. When overexpressed, it is able to induce centrosome amplification through the simultaneous generation of multiple procentrioles adjoining each parental centriole during S phase. Centrosome amplification following overexpression can initiate tumorigenesis, highlighting the importance of centrosome regulation in cancers. The protein is Serine/threonine-protein kinase PLK4 (SAK) of Drosophila virilis (Fruit fly).